The following is a 1578-amino-acid chain: Bromodomain-containing protein DDB_G0270170 (1578 aa).

Over residues 1–12 the composition is skewed to acidic residues; the sequence is MSLEQQDETVVE. Disordered regions lie at residues 1 to 39, 108 to 127, 151 to 285, and 319 to 454; these read MSLEQQDETVVEEETKTSFETNNSTANNTNNNTDNTYKE, NNNNGDENNKDIHDSSNNTE, HYSD…AKEL, and NENI…TTQT. Low complexity predominate over residues 18–35; sequence SFETNNSTANNTNNNTDN. Basic and acidic residues predominate over residues 152–163; the sequence is YSDDESSKEKQD. Low complexity-rich tracts occupy residues 164–185 and 197–231; these read NINSNNNNNKNKNEQIINSENI and TTPSDTPPTLTNNTSSTTTTTTTNNTTTAATTTTN. Composition is skewed to polar residues over residues 319–332 and 340–351; these read NENIFSSSRKSTTK and TASTTNTPIITA. Low complexity predominate over residues 352 to 383; it reads QQNTTPLSPTQTTTTTTTPTTTTAQQNTPAQT. The segment covering 384 to 395 has biased composition (polar residues); that stretch reads ESKPPTTISINI. 2 stretches are compositionally biased toward low complexity: residues 396–407 and 417–433; these read KGSKSPKTTGGK and VVISQPVVPSTPVVATT. Residues 443–454 show a composition bias toward polar residues; it reads STANNNSETTQT. Residues 479–506 adopt a coiled-coil conformation; the sequence is SDSATIQQLQQSISMLEDKIRLISSNNK. Disordered stretches follow at residues 543-565 and 580-730; these read FTKSSTLAPPSSERKYSNLYSDD and IPIP…RMGK. 2 stretches are compositionally biased toward low complexity: residues 604 to 653 and 660 to 686; these read NTST…PPQQ and TQQENTSSTTTTTTTTTTTTNTEDTTT. A Bromo domain is found at 735 to 841; sequence VVLTPVFKRC…DVFEKGFPKV (107 aa). Positions 851–903 form a coiled coil; the sequence is KNVDQEKIEKLSNDLKNVTKELEKFKKDDSNSINNNNNNNNNYNNNNNNNNNN. Disordered stretches follow at residues 874–969, 1039–1167, 1184–1452, and 1480–1544; these read KFKK…KVTT, HALP…NNNN, SIPE…TDSA, and EREE…KGNM. 3 stretches are compositionally biased toward low complexity: residues 881-911, 918-961, and 1047-1061; these read NSINNNNNNNNNYNNNNNNNNNNSSSSSSRS, SSGS…SSNN, and SSTHSSHSSSHDSSS. An NET domain is found at 957 to 1039; that stretch reads SSSNNKKYPK…QYKNGEIPQH (83 aa). Residues 1064 to 1077 show a composition bias toward basic and acidic residues; sequence REIEKLQKQLDRLG. Positions 1092–1107 are enriched in basic residues; that stretch reads HSKRISKPISKARGRK. Positions 1112-1167 are enriched in low complexity; the sequence is SSSNLNNSSNNINNNNNNINNYNNNNNYNNNNNNNLNNNNNNNINSNLNNNLNNNN. A coiled-coil region spans residues 1113–1150; the sequence is SSNLNNSSNNINNNNNNINNYNNNNNYNNNNNNNLNNN. A compositionally biased stretch (acidic residues) spans 1192 to 1204; sequence TDISESSDSESDS. Low complexity-rich tracts occupy residues 1205–1218 and 1231–1334; these read ESGSSDSSSSYSDS and YNNS…SLTN. Residues 1280 to 1308 adopt a coiled-coil conformation; the sequence is NSNNNNSNNNNNNVNNNNNNHNNNNHNNN. Residues 1356–1369 show a composition bias toward polar residues; the sequence is SVASWSFDPTNNKE. Residues 1370–1386 show a composition bias toward low complexity; the sequence is SSSSSSTSSTSSTSNTT. A compositionally biased stretch (polar residues) spans 1387 to 1399; that stretch reads LTPIIQQSSLTHA. Low complexity-rich tracts occupy residues 1400 to 1424 and 1432 to 1451; these read SSPISSSTFVSFSSSSSTPPTNNLS and NSPSINSPSSPSANNNNTDS. Residues 1462-1544 adopt a coiled-coil conformation; that stretch reads TLKQKEKERV…EKLNNSKGNM (83 aa). A compositionally biased stretch (basic and acidic residues) spans 1480-1538; sequence EREEKEEELKKEEEKKRIEMEEIKRLAKEKEEREAEETRKQIESERAAAREAREKEKLN.

In Dictyostelium discoideum (Social amoeba), this protein is Bromodomain-containing protein DDB_G0270170.